Here is a 1368-residue protein sequence, read N- to C-terminus: DNA-directed RNA polymerase subunit beta (1368 aa).

Belongs to the RNA polymerase beta chain family. The RNAP catalytic core consists of 2 alpha, 1 beta, 1 beta' and 1 omega subunit. When a sigma factor is associated with the core the holoenzyme is formed, which can initiate transcription.

It catalyses the reaction RNA(n) + a ribonucleoside 5'-triphosphate = RNA(n+1) + diphosphate. DNA-dependent RNA polymerase catalyzes the transcription of DNA into RNA using the four ribonucleoside triphosphates as substrates. The sequence is that of DNA-directed RNA polymerase subunit beta from Cupriavidus metallidurans (strain ATCC 43123 / DSM 2839 / NBRC 102507 / CH34) (Ralstonia metallidurans).